Consider the following 208-residue polypeptide: Receptor expression-enhancing protein 6 (208 aa).

3 helical membrane-spanning segments follow: residues 49-69 (GAFL…GFVY), 93-113 (WVIY…LHWF), and 115-135 (FYYV…SWNG). The disordered stretch occupies residues 187–208 (VGPAESEPRSLPSSAHTEPTVD). Positions 197–208 (LPSSAHTEPTVD) are enriched in polar residues.

It belongs to the DP1 family.

The protein resides in the endoplasmic reticulum membrane. Its subcellular location is the cytoplasmic vesicle. It localises to the clathrin-coated vesicle membrane. Functionally, required correct function and survival of retinal photoreceptors. Required for retinal development. In rod photoreceptors, facilitates stability and/or trafficking of guanylate cyclases and is required to maintain endoplasmic reticulum and mitochondrial homeostasis. May play a role in clathrin-coated intracellular vesicle trafficking of proteins from the endoplasmic reticulum to the retinal rod plasma membrane. The chain is Receptor expression-enhancing protein 6 from Danio rerio (Zebrafish).